We begin with the raw amino-acid sequence, 56 residues long: Defensin-1 (56 aa).

A signal peptide spans 1-24 (MKAIVVLLILALILCLYAMTTVEG). 3 disulfides stabilise this stretch: Cys-26–Cys-45, Cys-31–Cys-53, and Cys-35–Cys-55.

The protein localises to the secreted. Its function is as follows. Antibacterial protein involved in the immune response to septic injury. When combined with 14.026 kDa and 14.059 kDa hemolymph antimicrobial peptides, it has a strong cooperative activity against the Gram-positive bacteria B.subtilis and S.aureus, and against the Gram-negative bacteria E.coli DH5-alpha and K.pneumoniae ATCC 138833. Does not show detectable antibacterial activity when present alone. Has no hemolytic activity in human erythrocytes. The chain is Defensin-1 from Centruroides limpidus (Mexican scorpion).